Reading from the N-terminus, the 106-residue chain is Large ribosomal subunit protein P2 (106 aa).

A disordered region spans residues 80–106; it reads AAAAPAKKVVEEKKEESDDDMGMGLFD.

It belongs to the eukaryotic ribosomal protein P1/P2 family. In terms of assembly, P1 and P2 exist as dimers at the large ribosomal subunit. Phosphorylated.

Functionally, plays an important role in the elongation step of protein synthesis. This Dictyostelium discoideum (Social amoeba) protein is Large ribosomal subunit protein P2 (rplp2).